Consider the following 1119-residue polypeptide: Protein translocase subunit SecA (1119 aa).

ATP contacts are provided by residues Gln177, 195-199, and Asp692; that span reads GEGKT. The tract at residues 1025–1081 is disordered; it reads APSIHEARQTKSKEKVETRKEEIPNMDERAAQSRAAGNTQRQQPEVTETIVRDRPKI. Over residues 1029–1055 the composition is skewed to basic and acidic residues; the sequence is HEARQTKSKEKVETRKEEIPNMDERAA. Polar residues predominate over residues 1059–1070; sequence AAGNTQRQQPEV.

It belongs to the SecA family. As to quaternary structure, monomer and homodimer. Part of the essential Sec protein translocation apparatus which comprises SecA, SecYEG and auxiliary proteins SecDF. Other proteins may also be involved.

The protein resides in the cell inner membrane. The protein localises to the cytoplasm. It carries out the reaction ATP + H2O + cellular proteinSide 1 = ADP + phosphate + cellular proteinSide 2.. In terms of biological role, part of the Sec protein translocase complex. Interacts with the SecYEG preprotein conducting channel. Has a central role in coupling the hydrolysis of ATP to the transfer of proteins into and across the cell membrane, serving as an ATP-driven molecular motor driving the stepwise translocation of polypeptide chains across the membrane. This is Protein translocase subunit SecA from Christiangramia forsetii (strain DSM 17595 / CGMCC 1.15422 / KT0803) (Gramella forsetii).